The primary structure comprises 393 residues: Phosphatidate cytidylyltransferase (393 aa).

A run of 8 helical transmembrane segments spans residues 49 to 69 (NFFRRLVLSIVMISGFCWISV), 73 to 93 (IYSFGLIIFLTISIIREIIGI), 108 to 128 (IILGLAVPIYSYLVFPSIMMM), 141 to 161 (LSFVCFYSYVAAFMCFVASLR), 171 to 191 (LFALIHLSTYTMAIAAKCAIF), 198 to 218 (FWFVFPALLVISNDISAYVVG), 237 to 257 (GFIGAFIFTTAVGFALGHLHV), and 290 to 310 (IHIIPFIFVASFVAPFSGFLA).

This sequence belongs to the CDS family.

The protein resides in the membrane. The enzyme catalyses a 1,2-diacyl-sn-glycero-3-phosphate + CTP + H(+) = a CDP-1,2-diacyl-sn-glycerol + diphosphate. It functions in the pathway phospholipid metabolism; CDP-diacylglycerol biosynthesis; CDP-diacylglycerol from sn-glycerol 3-phosphate: step 3/3. This is Phosphatidate cytidylyltransferase (CDS1) from Encephalitozoon cuniculi (strain GB-M1) (Microsporidian parasite).